The sequence spans 219 residues: Orotidine 5'-phosphate decarboxylase (219 aa).

Residues aspartate 10, lysine 32, 58–67, serine 113, 163–173, glycine 186, and arginine 187 each bind substrate; these read DFKVADIPYT and PGIGAQGGDPY. Lysine 60 (proton donor) is an active-site residue.

Belongs to the OMP decarboxylase family. Type 1 subfamily. Homodimer.

The enzyme catalyses orotidine 5'-phosphate + H(+) = UMP + CO2. The protein operates within pyrimidine metabolism; UMP biosynthesis via de novo pathway; UMP from orotate: step 2/2. Functionally, catalyzes the decarboxylation of orotidine 5'-monophosphate (OMP) to uridine 5'-monophosphate (UMP). This chain is Orotidine 5'-phosphate decarboxylase, found in Thermoplasma volcanium (strain ATCC 51530 / DSM 4299 / JCM 9571 / NBRC 15438 / GSS1).